We begin with the raw amino-acid sequence, 314 residues long: Putative S-adenosyl-L-methionine-dependent methyltransferase MRA_3805 (314 aa).

Residues aspartate 132 and 161-162 (DL) contribute to the S-adenosyl-L-methionine site.

Belongs to the UPF0677 family.

Functionally, exhibits S-adenosyl-L-methionine-dependent methyltransferase activity. This chain is Putative S-adenosyl-L-methionine-dependent methyltransferase MRA_3805, found in Mycobacterium tuberculosis (strain ATCC 25177 / H37Ra).